Here is a 609-residue protein sequence, read N- to C-terminus: 2',5'-phosphodiesterase 12 (609 aa).

Residues 1–42 constitute a mitochondrion transit peptide; sequence MWRLPGARAALRVIRTAVEKLSRAEAGSQTAAGAMERAVVRC. Over residues 89 to 99 the composition is skewed to basic residues; it reads AAAAKKSRKSR. Disordered regions lie at residues 89 to 111 and 206 to 230; these read AAAA…CSGP and AEPE…ETDV. Low complexity-rich tracts occupy residues 100-111 and 213-224; these read PNASGGAACSGP and PSSLSPSSPSSS. At Ser-217 the chain carries Phosphoserine. Residues Glu-351, Asp-496, and Asn-498 each contribute to the Mg(2+) site. Residue Asp-496 is the Proton donor/acceptor of the active site.

It belongs to the CCR4/nocturin family. Requires Mg(2+) as cofactor. Ubiquitous.

It localises to the mitochondrion matrix. It carries out the reaction Exonucleolytic cleavage of poly(A) to 5'-AMP.. In terms of biological role, enzyme that cleaves 2',5'-phosphodiester bond linking adenosines of the 5'-triphosphorylated oligoadenylates, triphosphorylated oligoadenylates referred as 2-5A modulates the 2-5A system. Degrades triphosphorylated 2-5A to produce AMP and ATP. Also cleaves 3',5'-phosphodiester bond of oligoadenylates. Plays a role as a negative regulator of the 2-5A system that is one of the major pathways for antiviral and antitumor functions induced by interferons (IFNs). Suppression of this enzyme increases cellular 2-5A levels and decreases viral replication in cultured small-airway epithelial cells and Hela cells. In Homo sapiens (Human), this protein is 2',5'-phosphodiesterase 12 (PDE12).